The sequence spans 4246 residues: MFESIVSNLLTRYLKEYIKALNTDNLNISIWSGNVSLENLELKSRALEKFNLPFTIKEGFLGKLSLKIPWNNLKTEPVIVVIDQLYITASPKSTTVWNEEDEDLLLQKKLKKLKIYEALKEEKRKKQQQLKEKREIRNNLIKEKRLQKKQIKNQLKQQLRQRKKDAKNASPVNSNNNNNNNSNLVSESNIPSSSSSSSSSLYDDDDNSSKDANKSDDTDMDVDDDDEFQEATEGDYDNEEEQDDHDEEDDLSDDDDDDDDEEDDYEMEDEDDVYKTLVDNQGNENDSQSGGLIDSSSFAEKLRNKIVDNLQIMIYNVHIRFEDSVTNPTTPYCFGVTLEHLLAQSSNEEWKPSFIHTPHTLVHKLITLQNLSIYWDADNDKPDLNYKSISEFKSLMTKLIPKKSSPSTTTTTPPISPPPKETQLIKPQHNYLLHPVCGSLKLLINKSIIPNKYIPLYTANFEFDEINLELESKQYSGILALVDWFTTQKKGERYRKFKTKESGGVLKTAKDRWEFAGKCILADVRDKIRKWTPQFFDKRRKDRLDYIHLYKLKKRKKTLSDLNTTKLNSLEKEYSFEDLVYFRSLADAQLKAEDNHQQQQKQQQQQQQQQSNISPKIISSNKNNNNDSSSGSSSNNNNSSTTSTTSTTTSSSSSSNSTDSKDIMKSSGDKNVNNNNNMGDNENKDNIDKKEENKNDDQDNKNKNKNKIITTISHKKNKSKDDQNSGGWFKWFGWGSSNKSKQQQQQQDESEDQDSSILGTLDITDQQKRELYSTIEYDEHQKSKNIVYPKDYVKTRINFTMNRGSVAFRLQPPNSPITHFSSKSPPSSKGNADLMIELVRMSVAVDKFVGSLYVQAILETIYVRDFFTKDTQFPILMKPIVVKNNTFVNSSSRTLPYSNSEGVEDINKDYLSIVSSSPSPVSSPSRDKRLEEETKQEDEKEKKLNVDKNLKCSLSSIEKVSCDKKSKDDCSSGGSGGVDNGGEEGDDKYSTKGTTESREESDGSGDYENNTNDEKQPLFSMTLQQNPLNSESDFSIFIEALPLEVVYNKSMMDAILEFFGNAPSDTLKEIEEAARNQIKIFKDKTTLRIQHELENHKSIDLDININAPHVLIPESFTIPSAPILVLDLGSFSVQSVVTHKDDTLSEEIEISSILKNDFSIIQQQQQQQQQQQQQQQQQQQQQQQQQQQQQQIPIQPQSQQQQQQQQQQQQQSQQQQQAQQQAQQQQQSQHPSSNDDNSSSNGGCSVDIKSPSVNTSIISDNSVYDEENVTKYLYDLFELKLNNIQFYIASQGESLQLVEKFDINFKIYKCIIKSQTLLSKLKLFGGLPSLNMLLSQKSIEILINIISTLQNDPPEISTHFSSKKNAEDENNNSNLDRVDFETVIHDQEVDIEEYYNGVNSDDDNNDDENDKTTQDDQDDKEKSSGNDDSLKKKSKKPKLKKEGSFILESMDLEHTQDQLPILMIYNTILEVSFSVTTVSLQVVEDDKPFIRMILSDISAQVLKRTFDTSIKLSLAKLSIEDLYQDFKNESFKYLANSSIDNNQQPLQSELENSSGIEREEHLISISISSVQRNSPQYSGISQQIDVSFNTLFVNINKKLVIKIMNLVDFVEKTIVETVMKRREKRKRLEKDKDNQPLPTSESNQQSIPQKQQQQQQQQQQQQQQQQQQQQQPPPPLQKQKSQSHINLGKAFENSTFKIDKDNSIVIITTKMKSLVVNLNEDDQSYFALTVSDLSINFDIDLESSMMRFKLGNLTISDISKEASKDLNPLFGTDGEHIIEFYVYTLKNSKPLETITTTATAKITLDNETKETISTTLFEKVKEKPPSSPLKDSTSILQDENEIFDTKIGVRMSSVKLIVVRSLIDRIIDYFEEFAPNQIDQILADSAKGAVEIMSTRRINQQKRILFEVDVNTPRIIFPKNHYSPYVIIADLGHISVFNKYKSNLTNSNGGDNTILSSEQVFVYASSVNFHACKFQNGKVLESTIEPISNKINVHVNIESFLNPSLLEEDQLDEPKQKVDGEISPINLKISDQQYSLTIAIIKSLIEPTIKQKKRKKRNHRRIESQLNLDNLYQNFLNVASSNQDFKSVDVPIGLPLPTPILESLHDHKSSSSSSSSSPPPPPPPSSSQQQQQQIIKSLDSIKDQITFHLPHISLEFFRKNKESVVSFEIDEFECSLIEYDNGNEYSNFSLGSIDLTDTRKSTVNHFRRIIHHSKEKNQQSADGSGLSPPLSKDEKEKKEMKKELQVYVFEKRGGDTQVKLILDHFRGVIVPESLISMIDFIMPGIKALSSLSEISPVSSPVLNVDTMNNNPHLFGRDPLKSTVKAMLEEKNKKRMTTNTVVHIETSNIDLSFVDNPATRESRLLIARGSLFGKVTIQKSDSLTYKDIQLCIDEFILFKCRADNFDQTIESIIDPLSITTNISMVEGKDYLPIDILIAVDPMHISISFQDLLLFLSLSKNIESLINSLNNLQQQHQQQNNNSNNNNNNNNNNNNNNNNNNNNNNNNNNDDKSKQEQQILRVNFQSPSVELTVINDYGNKYCGIIDLKIRDISVEVAQNRVLFAMFIAANYFNVSKSVWEPMIEEWGCKFGIETSEIGTKDQSKNIVISSSGKLNLNITKSLFDTFTTIYPLIEIAMDISKADSTQSAYDLGYKTGVNNNLLQHYKSQNYHPFLLKNQTGLEIQYQISIICASSFGDTQSNDFVGLSTSTSPSTSTTTTSTSTSTSTSTSTSTSTSTSTSTSTSTSNPTTSSKTQTTKNKILEDGGEIYLDLKETLYSNGNTNQEKDKFRSINNAQKYRDITSISLFRINIVVDGFEAISNLPIHKTGIYICSLIPKVNVSSSTKSLPSQQLVFEVRVSDFTKELIVRSNVLIVNETDHTLEYLDKPTHTLRKVCPFILEPKQSKSLSICGGNSSSSSSSSSSSTTDMIFSFRPMIHQSFSSSANLGNNQQRWTHPLNCNNGLLHPGTLLFDCPPNKFYCLQIDQHLSNFQLEDQQINPLTGGTIPQHQPSYHHISNQQYYENSMVNDENQDNQSSSSMNRIIQKTNHIIKIVPPLVIYNQFIIPIDITLHDQESNRTVGKESIQENQTKGIYCVNVERLIMIKVHMKGFGSSGFIQINQSSQNYINKQPRKLISTTSDQTFFVNIFQNELFGSIHVCLYPTFSIINQIGLNLSFKLNNLSDNNNNNNNNNNNNNNTIHDQPVIIASVFNSQTFSNLLTKNTPKNKTTTTTTTTAATTKPIQGTIDYKKDPKKWYNDKNISQISMFSPIPSNVGTSNNTSYLVLQVDGNSQWSQPISIQPNKQEPITIIKEQKESPTSSKITKLSLQFLISTSIANESLTTNITVDPQFILVNNLAQPLYYCQKDSNLYKNYCLNPNETIPFHFFDDQLLKKIAFRLSPNNDWSGCFNINKSISFNIKLDKPIDDDQDSDSDSGSSNSSSPSISSSSTSPLNLSSSSAFSNCSSNNNNNNGGGGGSSDDQFYLPMIQMVQEKGIYFVVVNPETKDYPPYRVENLISVPIAIHQVDTNEQPIPIFSNQSKRYVWSNPMGTKRLGITIPNTNYKKSVSLDKLQYHQPYQVKHSNKTLDIKLDIIANGPTNILRLTDLNDHNSISKTLNNNNNNNNNNNNNNLNSVTKDNNNNNNQNNNNQNNNNQNNNNLNFEICIGGISVSLIDGHPKELMYITLRGLQLRFKQYSTEQNINLSIHSFKVDNQLYHTPYPVMIQSYNSNNLKPTKHSFNVSLIRSGQYQPKELHQVGIEYIKELNFDIQPFDVEIDETILFHLYNFIKSIKLPNNQNNNNNQNNNNQNNDFNNIDEYDEKEKNDGKIIKSIKLPYSNLPIPHSIDSKRLYIEVLNLPLVDVTISYCLSPHSRPLIGPWASVFSTIANIDKASLHLGSWKLEHQFVTANALALSLFSHYKWEVSKILLYSDVFGAPLSLVENITRGINDFIYESKEGLNNPENFGKGLVKGTKSLVSNSIYGIFNSASKLTNTVGSAIAPFSMDENYLAQRDRHTQPKHAIDGVSNGIGRFTQGLAHGLSGLFDQPVKEFQDQGFSGLVKGFGKGILGTVVKPTVGAIDMINAATQGIRNSYLDPASSKSRSRPPRFIGPDAIIKPFSFEKSFLQQVIKTTNTHQSLLSSKEWYIIHFKVYDEKKTPYYLVISTQKFYLFDFKFNFILSIKLWDLDLSLKPKDDRYLSIQEIKKDDESPRNPTYVLLLDQDGKSISYSLLNSMHNIISTIKLDQTYFVSN.

One can recognise a Chorein N-terminal domain in the interval 2 to 113 (FESIVSNLLT…LLLQKKLKKL (112 aa)). 16 disordered regions span residues 141 to 271 (IKEK…EDED), 401 to 420 (PKKSSPSTTTTTPPISPPPK), 591 to 759 (KAED…SILG), 914 to 944 (VSSSPSPVSSPSRDKRLEEETKQEDEKEKKL), 964 to 1014 (KKSK…TNDE), 1217 to 1251 (QAQQQAQQQQQSQHPSSNDDNSSSNGGCSVDIKSP), 1356 to 1379 (ISTHFSSKKNAEDENNNSNLDRVD), 1395 to 1436 (YNGV…KSKK), 1622 to 1683 (REKR…KSQS), 2101 to 2131 (LESLHDHKSSSSSSSSSPPPPPPPSSSQQQQ), 2211 to 2237 (HHSKEKNQQSADGSGLSPPLSKDEKEK), 2471 to 2513 (QQQH…KSKQ), 2704 to 2756 (LSTS…QTTK), 3421 to 3449 (IDDDQDSDSDSGSSNSSSPSISSSSTSPL), 3611 to 3652 (KTLN…NNQN), and 3794 to 3813 (NNNNNQNNNNQNNDFNNIDE). A compositionally biased stretch (low complexity) spans 168–201 (NASPVNSNNNNNNNSNLVSESNIPSSSSSSSSSL). The span at 207 to 217 (NSSKDANKSDD) shows a compositional bias: basic and acidic residues. Positions 218-271 (TDMDVDDDDEFQEATEGDYDNEEEQDDHDEEDDLSDDDDDDDDEEDDYEMEDED) are enriched in acidic residues. Low complexity-rich tracts occupy residues 401-413 (PKKSSPSTTTTTP) and 597-658 (QQQQ…SNST). The span at 659–668 (DSKDIMKSSG) shows a compositional bias: basic and acidic residues. Residues 669–680 (DKNVNNNNNMGD) are compositionally biased toward low complexity. The segment covering 681–702 (NENKDNIDKKEENKNDDQDNKN) has biased composition (basic and acidic residues). Low complexity-rich tracts occupy residues 725-747 (SGGWFKWFGWGSSNKSKQQQQQQ) and 914-924 (VSSSPSPVSSP). Basic and acidic residues-rich tracts occupy residues 925-944 (SRDKRLEEETKQEDEKEKKL) and 987-1001 (DKYSTKGTTESREES). Positions 1217–1241 (QAQQQAQQQQQSQHPSSNDDNSSSN) are enriched in low complexity. Positions 1400–1409 (SDDDNNDDEN) are enriched in acidic residues. Basic and acidic residues-rich tracts occupy residues 1410-1431 (DKTTQDDQDDKEKSSGNDDSLK) and 1622-1634 (REKRKRLEKDKDN). A compositionally biased stretch (low complexity) spans 1644-1670 (QQSIPQKQQQQQQQQQQQQQQQQQQQQ). Composition is skewed to low complexity over residues 2471–2506 (QQQHQQQNNNSNNNNNNNNNNNNNNNNNNNNNNNNN), 2705–2755 (STST…TQTT), 3430–3449 (DSGSSNSSSPSISSSSTSPL), 3613–3652 (LNNNNNNNNNNNNNNLNSVTKDNNNNNNQNNNNQNNNNQN), and 3794–3809 (NNNNNQNNNNQNNDFN).

This sequence belongs to the VPS13 family.

The protein resides in the membrane. Its function is as follows. Mediates the transfer of lipids between membranes at organelle contact sites. The polypeptide is Intermembrane lipid transfer protein vps13F (vps13F) (Dictyostelium discoideum (Social amoeba)).